The sequence spans 581 residues: 2-succinyl-5-enolpyruvyl-6-hydroxy-3-cyclohexene-1-carboxylate synthase (581 aa).

Belongs to the TPP enzyme family. MenD subfamily. As to quaternary structure, homodimer. Requires Mg(2+) as cofactor. It depends on Mn(2+) as a cofactor. Thiamine diphosphate serves as cofactor.

The catalysed reaction is isochorismate + 2-oxoglutarate + H(+) = 5-enolpyruvoyl-6-hydroxy-2-succinyl-cyclohex-3-ene-1-carboxylate + CO2. It participates in quinol/quinone metabolism; 1,4-dihydroxy-2-naphthoate biosynthesis; 1,4-dihydroxy-2-naphthoate from chorismate: step 2/7. The protein operates within cofactor biosynthesis; phylloquinone biosynthesis. Functionally, catalyzes the thiamine diphosphate-dependent decarboxylation of 2-oxoglutarate and the subsequent addition of the resulting succinic semialdehyde-thiamine pyrophosphate anion to isochorismate to yield 2-succinyl-5-enolpyruvyl-6-hydroxy-3-cyclohexene-1-carboxylate (SEPHCHC). This is 2-succinyl-5-enolpyruvyl-6-hydroxy-3-cyclohexene-1-carboxylate synthase from Gloeothece citriformis (strain PCC 7424) (Cyanothece sp. (strain PCC 7424)).